The following is a 674-amino-acid chain: Tripartite terminase subunit 3 (674 aa).

A Walker A motif motif is present at residues 212–219; sequence VPRRHGKT. A Walker B motif motif is present at residues 305 to 310; sequence LLLVDE. The active-site For ATPase activity is E310. Catalysis depends on for nuclease activity residues D463 and E534. The tract at residues 580–600 is required for interaction with UL56 and DNA packaging; that stretch reads GRDKALAVEQFISRFNSGYIK. D651 (for nuclease activity) is an active-site residue.

This sequence belongs to the herpesviridae TRM3 protein family. In terms of assembly, interacts with the terminase subunits TRM1 and TRM2. Interacts with portal protein.

Its subcellular location is the host nucleus. Functionally, component of the molecular motor that translocates viral genomic DNA in empty capsid during DNA packaging. Forms a tripartite terminase complex together with TRM1 and TRM2 in the host cytoplasm. Once the complex reaches the host nucleus, it interacts with the capsid portal vertex. This portal forms a ring in which genomic DNA is translocated into the capsid. TRM3 carries an RNase H-like nuclease activity that plays an important role for the cleavage of concatemeric viral DNA into unit length genomes. The polypeptide is Tripartite terminase subunit 3 (Homo sapiens (Human)).